Here is a 429-residue protein sequence, read N- to C-terminus: Probable M18 family aminopeptidase 2 (429 aa).

Residues histidine 82, histidine 156, and histidine 401 each contribute to the Zn(2+) site.

It belongs to the peptidase M18 family. The cofactor is Zn(2+).

The chain is Probable M18 family aminopeptidase 2 from Stutzerimonas stutzeri (strain A1501) (Pseudomonas stutzeri).